The primary structure comprises 531 residues: CTP synthase (531 aa).

The tract at residues 1-264 is amidoligase domain; the sequence is MPKFVVVTGG…GDFLVERLRL (264 aa). CTP is bound at residue S13. Residue S13 participates in UTP binding. ATP is bound at residue 14–19; sequence GLGKGV. Y54 provides a ligand contact to L-glutamine. Residue D71 coordinates ATP. Mg(2+)-binding residues include D71 and E139. Residues 146-148, 185-190, and K221 contribute to the CTP site; these read DYE and KTKPLQ. Residues 185–190 and K221 each bind UTP; that span reads KTKPLQ. A Glutamine amidotransferase type-1 domain is found at 293 to 531; sequence CGKYVELPDA…LSAAVEQSRR (239 aa). Residue G351 participates in L-glutamine binding. C378 (nucleophile; for glutamine hydrolysis) is an active-site residue. L-glutamine contacts are provided by residues 379-382, E402, and R459; that span reads FGMQ. Catalysis depends on residues H504 and E506.

It belongs to the CTP synthase family. Homotetramer.

The catalysed reaction is UTP + L-glutamine + ATP + H2O = CTP + L-glutamate + ADP + phosphate + 2 H(+). It carries out the reaction L-glutamine + H2O = L-glutamate + NH4(+). The enzyme catalyses UTP + NH4(+) + ATP = CTP + ADP + phosphate + 2 H(+). It functions in the pathway pyrimidine metabolism; CTP biosynthesis via de novo pathway; CTP from UDP: step 2/2. With respect to regulation, allosterically activated by GTP, when glutamine is the substrate; GTP has no effect on the reaction when ammonia is the substrate. The allosteric effector GTP functions by stabilizing the protein conformation that binds the tetrahedral intermediate(s) formed during glutamine hydrolysis. Inhibited by the product CTP, via allosteric rather than competitive inhibition. Its function is as follows. Catalyzes the ATP-dependent amination of UTP to CTP with either L-glutamine or ammonia as the source of nitrogen. Regulates intracellular CTP levels through interactions with the four ribonucleotide triphosphates. The protein is CTP synthase of Pyrobaculum calidifontis (strain DSM 21063 / JCM 11548 / VA1).